We begin with the raw amino-acid sequence, 87 residues long: Small ribosomal subunit protein bS20 (87 aa).

Positions 1 to 12 (MANHKSALKRNR) are enriched in basic residues. The tract at residues 1-21 (MANHKSALKRNRQAAVRNARN) is disordered.

This sequence belongs to the bacterial ribosomal protein bS20 family.

Functionally, binds directly to 16S ribosomal RNA. This Syntrophotalea carbinolica (strain DSM 2380 / NBRC 103641 / GraBd1) (Pelobacter carbinolicus) protein is Small ribosomal subunit protein bS20.